The primary structure comprises 177 residues: Thymidine kinase (177 aa).

11–18 serves as a coordination point for ATP; sequence GPMLSGKS. The active-site Proton acceptor is the E83. Substrate is bound at residue F113. The Zn(2+) site is built by C138 and C141. 157 to 161 is a binding site for substrate; the sequence is IEIIG. Zn(2+) contacts are provided by C170 and C173.

It belongs to the thymidine kinase family. As to quaternary structure, homotetramer. Two molecules of substrate bind to each enzyme tetramer.

It carries out the reaction thymidine + ATP = dTMP + ADP + H(+). Phosphorylates thymidine and thymidine analogs, such as azidothymidine (AZT). Part of the salvage pathway for pyrimidine deoxyribonucleotide synthesis. This Monkeypox virus (strain Zaire-96-I-16) (MPX) protein is Thymidine kinase (OPG101).